A 188-amino-acid chain; its full sequence is Grand meiotic recombination cluster protein 2 (188 aa).

Polar residues-rich tracts occupy residues 1 to 13 (MSDT…QSSE) and 21 to 31 (ERTNSLKSPDV). The disordered stretch occupies residues 1-31 (MSDTTEVPRQSSENDQDNNLERTNSLKSPDV).

Probable transcriptional activator involved in meiotic prophase and synaptonemal complex (SC) assembly. The chain is Grand meiotic recombination cluster protein 2 (GMC2) from Saccharomyces cerevisiae (strain ATCC 204508 / S288c) (Baker's yeast).